Reading from the N-terminus, the 267-residue chain is RWD domain-containing protein 3 (267 aa).

Residues 7-114 form the RWD domain; the sequence is QELSALAAIF…LWIQQNLRLV (108 aa). Interaction with UBE2I/UBC9 regions lie at residues 13 to 15 and 100 to 102; these read AAI and VHE.

As to quaternary structure, interacts with UBE2I/UBC9, NFKBIA, HIF1A and NCOA2.

It is found in the nucleus. The protein resides in the cytoplasm. Its function is as follows. Enhancer of SUMO conjugation. Via its interaction with UBE2I/UBC9, increases SUMO conjugation to proteins by promoting the binding of E1 and E2 enzymes, thioester linkage between SUMO and UBE2I/UBC9 and transfer of SUMO to specific target proteins which include HIF1A, PIAS, NFKBIA, NR3C1 and TOP1. Positively regulates the NF-kappa-B signaling pathway by enhancing the sumoylation of NF-kappa-B inhibitor alpha (NFKBIA), promoting its stabilization which consequently leads to an increased inhibition of NF-kappa-B transcriptional activity. Negatively regulates the hypoxia-inducible factor-1 alpha (HIF1A) signaling pathway by increasing the sumoylation of HIF1A, promoting its stabilization, transcriptional activity and the expression of its target gene VEGFA during hypoxia. Has no effect on ubiquitination. This chain is RWD domain-containing protein 3 (Rwdd3), found in Mus musculus (Mouse).